The chain runs to 272 residues: uncharacterized protein (272 aa).

Positions 1–20 are cleaved as a signal peptide; that stretch reads MMEPKSIFLLGLLLFRVGKL.

This is an uncharacterized protein from Caenorhabditis elegans.